Consider the following 362-residue polypeptide: Methylthioribose-1-phosphate isomerase (362 aa).

Substrate contacts are provided by residues 53 to 55, Arg90, and Gln201; that span reads RGA. Asp242 (proton donor) is an active-site residue. 252 to 253 provides a ligand contact to substrate; the sequence is NK.

It belongs to the eIF-2B alpha/beta/delta subunits family. MtnA subfamily.

It catalyses the reaction 5-(methylsulfanyl)-alpha-D-ribose 1-phosphate = 5-(methylsulfanyl)-D-ribulose 1-phosphate. Its pathway is amino-acid biosynthesis; L-methionine biosynthesis via salvage pathway; L-methionine from S-methyl-5-thio-alpha-D-ribose 1-phosphate: step 1/6. Catalyzes the interconversion of methylthioribose-1-phosphate (MTR-1-P) into methylthioribulose-1-phosphate (MTRu-1-P). This chain is Methylthioribose-1-phosphate isomerase, found in Paramagnetospirillum magneticum (strain ATCC 700264 / AMB-1) (Magnetospirillum magneticum).